The chain runs to 339 residues: D-erythrose-4-phosphate dehydrogenase (339 aa).

NAD(+) is bound at residue 12 to 13 (RI). Substrate contacts are provided by residues 154-156 (SCT), Arg200, 213-214 (TK), and Arg236. Cys155 (nucleophile) is an active-site residue. NAD(+) is bound at residue Asn318.

It belongs to the glyceraldehyde-3-phosphate dehydrogenase family. Epd subfamily. As to quaternary structure, homotetramer.

Its subcellular location is the cytoplasm. The enzyme catalyses D-erythrose 4-phosphate + NAD(+) + H2O = 4-phospho-D-erythronate + NADH + 2 H(+). The protein operates within cofactor biosynthesis; pyridoxine 5'-phosphate biosynthesis; pyridoxine 5'-phosphate from D-erythrose 4-phosphate: step 1/5. Catalyzes the NAD-dependent conversion of D-erythrose 4-phosphate to 4-phosphoerythronate. This is D-erythrose-4-phosphate dehydrogenase from Proteus mirabilis (strain HI4320).